We begin with the raw amino-acid sequence, 365 residues long: Peptide chain release factor 2 (365 aa).

At Gln252 the chain carries N5-methylglutamine.

It belongs to the prokaryotic/mitochondrial release factor family. Methylated by PrmC. Methylation increases the termination efficiency of RF2.

Its subcellular location is the cytoplasm. In terms of biological role, peptide chain release factor 2 directs the termination of translation in response to the peptide chain termination codons UGA and UAA. The protein is Peptide chain release factor 2 of Yersinia pseudotuberculosis serotype O:1b (strain IP 31758).